The primary structure comprises 199 residues: Hematopoietic prostaglandin D synthase (199 aa).

In terms of domain architecture, GST N-terminal spans 2–79; that stretch reads PNYKLTYFNL…YLARESGLAG (78 aa). Residues tyrosine 8, arginine 14, tryptophan 39, 49 to 51, and 63 to 64 contribute to the glutathione site; these read GKV and QS. The region spanning 81–199 is the GST C-terminal domain; sequence TPVEQALADA…WIQKRPKTAI (119 aa).

The protein belongs to the GST superfamily. Sigma family. Requires glutathione as cofactor. Highly expressed in liver, kidney, small intestine and colon, moderately in pancreas, bone marrow, lung and ovary, and expressed at low levels in spleen, thymus, heart and brain. Not detected in oviduct or skin (at protein level). Expressed in liver.

It is found in the cytoplasm. It catalyses the reaction prostaglandin H2 = prostaglandin D2. The enzyme catalyses RX + glutathione = an S-substituted glutathione + a halide anion + H(+). The catalysed reaction is 2-glyceryl-prostaglandin H2 = 2-glyceryl-prostaglandin D2. Functionally, bifunctional enzyme which catalyzes both the conversion of PGH2 to PGD2, a prostaglandin involved in smooth muscle contraction/relaxation and a potent inhibitor of platelet aggregation, and the conjugation of glutathione with a wide range of aryl halides, organic isothiocyanates and alpha,beta-unsaturated carbonyls. Also exhibits low glutathione-peroxidase activity towards cumene hydroperoxide and t-butyl hydroperoxide. The chain is Hematopoietic prostaglandin D synthase (HPGDS) from Gallus gallus (Chicken).